Reading from the N-terminus, the 90-residue chain is Small ribosomal subunit protein bS16 (90 aa).

It belongs to the bacterial ribosomal protein bS16 family.

The sequence is that of Small ribosomal subunit protein bS16 from Streptococcus equi subsp. zooepidemicus (strain H70).